The chain runs to 318 residues: Thioredoxin reductase (318 aa).

FAD is bound at residue 36 to 43 (TGLQQGGQ). The cysteines at positions 136 and 139 are disulfide-linked. Residue 286 to 295 (DVMDHNYRQA) coordinates FAD.

This sequence belongs to the class-II pyridine nucleotide-disulfide oxidoreductase family. Homodimer. It depends on FAD as a cofactor.

Its subcellular location is the cytoplasm. The catalysed reaction is [thioredoxin]-dithiol + NADP(+) = [thioredoxin]-disulfide + NADPH + H(+). The chain is Thioredoxin reductase (trxB) from Haemophilus influenzae (strain ATCC 51907 / DSM 11121 / KW20 / Rd).